A 267-amino-acid polypeptide reads, in one-letter code: Sulfate transporter CysZ (267 aa).

The next 4 membrane-spanning stretches (helical) occupy residues 29–49 (FVIM…WLFI), 73–93 (ILLI…FTTL), 149–169 (IILF…PIIV), and 212–232 (GLVM…PVAV).

It belongs to the CysZ family.

It is found in the cell inner membrane. In terms of biological role, high affinity, high specificity proton-dependent sulfate transporter, which mediates sulfate uptake. Provides the sulfur source for the cysteine synthesis pathway. This is Sulfate transporter CysZ from Pasteurella multocida (strain Pm70).